The following is a 455-amino-acid chain: MSKLFLDELPESLSRKIGTVVRVLPSSLEIFEELYKYALNENSNDRSGRHKKPRIDVSSDLLKTDEISETNTIFKLEGVSVLSPLRKKLDLVFYLSNVDGSPVITLLKGNDRELSIYQLNKNIKMASFLPVPEKPNLIYLFMTYTSCEDNKFSEPVVMTLNKENTLNQFKNLGLLDSNVTDFEKCVEYIRKQAILTGFKISNPFVNSTLVDTDAEKINSFHLQCHRGTKEGTLYFLPDHIIFGFKKPILLFDASDIESITYSSITRLTFNASLVTKDGEKYEFSMIDQTEYAKIDDYVKRKQMKDKSMSEELKAKSKSKGQATDGTADQPSILQEATRQMQDEKKAGVFSDDDEENDQNFEAESDLSDGSGQESSDGAEDGEEAEEDDEEDDEEEDKKGQSALNRDNSFASINGQPEQELQYKEFKEPLELEDIPIEIDNDDDEDDEDGSGVEYD.

Residue Ser-2 is modified to N-acetylserine. Residues 2 to 67 (SKLFLDELPE…SSDLLKTDEI (66 aa)) are dimeric region. PH domains lie at 68–200 (SETN…GFKI) and 217–301 (INSF…VKRK). Residues 68–301 (SETNTIFKLE…AKIDDYVKRK (234 aa)) form a double PH domain region. A compositionally biased stretch (basic and acidic residues) spans 305-314 (DKSMSEELKA). The segment at 305-455 (DKSMSEELKA…DEDGSGVEYD (151 aa)) is disordered. Residues 319 to 339 (KGQATDGTADQPSILQEATRQ) are compositionally biased toward polar residues. Composition is skewed to acidic residues over residues 350 to 366 (SDDD…ESDL) and 376 to 395 (DGAE…DEEE). Polar residues predominate over residues 402 to 418 (ALNRDNSFASINGQPEQ). Residues Ser-408 and Ser-411 each carry the phosphoserine modification. Over residues 420-429 (LQYKEFKEPL) the composition is skewed to basic and acidic residues. Residues 430-455 (ELEDIPIEIDNDDDEDDEDGSGVEYD) are compositionally biased toward acidic residues. A Phosphoserine modification is found at Ser-450.

It belongs to the RTT106 family. As to quaternary structure, homodimers (via the N-terminal domain). Interacts with the SWI/SNF complex. Interacts with the RSC complex. Interacts with the HIR complex. Interacts with the CAF-1 complex. Interacts with RLF2. Interacts with SIR4. Interacts with YTA7. Interacts with CAC2. Interacts with HPC2. Interacts with HIR2. Interacts with MSI1. Interacts with HIR1. Interacts with histone H3. Interacts with histone H4.

Its subcellular location is the nucleus. It is found in the chromosome. Histones H3 and H4 chaperone involved in the nucleosome formation and heterochromatin silencing. Required for the deposition of H3K56ac-carrying H3-H4 complex onto newly-replicated DNA. Plays a role in the transcriptional regulation of the cell-cycle dependent histone genes by directly recruiting the SWI/SNF and RSC chromatin remodeling complexes to the histone genes in a cell cycle dependent manner. In cooperation with HIR and ASF1, creates a repressive structure at the core histone gene promoter and contributes to their repression outside of S phase. Involved in regulation of Ty1 transposition. This is Histone chaperone RTT106 from Saccharomyces cerevisiae (strain ATCC 204508 / S288c) (Baker's yeast).